The chain runs to 210 residues: 3-hexulose-6-phosphate synthase (210 aa).

Belongs to the HPS/KGPDC family. HPS subfamily.

The catalysed reaction is D-ribulose 5-phosphate + formaldehyde = D-arabino-hex-3-ulose 6-phosphate. It participates in one-carbon metabolism; formaldehyde assimilation via RuMP pathway; D-fructose 6-phosphate from D-ribulose 5-phosphate and formaldehyde: step 1/2. Catalyzes the condensation of ribulose 5-phosphate with formaldehyde to form 3-hexulose 6-phosphate. This Staphylococcus aureus (strain MRSA252) protein is 3-hexulose-6-phosphate synthase.